The primary structure comprises 478 residues: RNA pseudouridine synthase 3, mitochondrial (478 aa).

The transit peptide at 1–20 (MWKAKTCFRQIYLTVLIRRY) directs the protein to the mitochondrion. The 71-residue stretch at 92–162 (EEIYDKAIQT…MRISKRYDTI (71 aa)) folds into the S4 RNA-binding domain. Asp232 is a catalytic residue.

Belongs to the pseudouridine synthase RluA family.

The protein resides in the mitochondrion. The enzyme catalyses a uridine in RNA = a pseudouridine in RNA. The polypeptide is RNA pseudouridine synthase 3, mitochondrial (Arabidopsis thaliana (Mouse-ear cress)).